Consider the following 172-residue polypeptide: General stress protein 18 (172 aa).

In terms of domain architecture, PfpI endopeptidase spans 3-171 (KKIAVVLTYY…FNRESLALLE (169 aa)). The Nucleophile role is filled by Cys-104. His-105 is an active-site residue.

Belongs to the peptidase C56 family.

Its function is as follows. Functions in the protection against aldehyde-stress, possibly by degrading damaged proteins. The chain is General stress protein 18 (yfkM) from Bacillus subtilis (strain 168).